Here is an 89-residue protein sequence, read N- to C-terminus: Small ribosomal subunit protein uS19 (89 aa).

It belongs to the universal ribosomal protein uS19 family.

Protein S19 forms a complex with S13 that binds strongly to the 16S ribosomal RNA. The sequence is that of Small ribosomal subunit protein uS19 from Xylella fastidiosa (strain 9a5c).